An 81-amino-acid chain; its full sequence is MAVKIRLRRMGCKKAPFYRIVVADSRSPRDGRFIEEIGYYNPITEPAEVKINEEKASKWLQDGAQPTDVVKKLFTQAGLSK.

This sequence belongs to the bacterial ribosomal protein bS16 family.

This is Small ribosomal subunit protein bS16 from Clostridium botulinum (strain Eklund 17B / Type B).